Reading from the N-terminus, the 209-residue chain is MNLAPIHDPSSSSTTTTSSSTPYGLTKDEFSTLDSIIRTHHTFPRSPNTCTSLIAHRVDAPAHAIWRFVRDFANPNKYKHFIKSCTIRVNGNGIKEIKVGTIREVSVVSGLPASTSVEILEVLDEEKRILSFRVLGGEHRLNNYRSVTSVNEFVVLEKDKKKRVYSVVLESYIVDIPQGNTEEDTRMFVDTVVKSNLQNLAVISTASPT.

The segment at 1–23 is disordered; it reads MNLAPIHDPSSSSTTTTSSSTPY. Residues 10-21 show a composition bias toward low complexity; that stretch reads SSSSTTTTSSST. The segment at 43-205 is START-like; sequence FPRSPNTCTS…NLQNLAVIST (163 aa). Residues Lys-79, 113 to 118, 140 to 146, and Glu-170 contribute to the abscisate site; these read ASTSVE and RLNNYRS. Positions 109-113 match the Gate loop motif; it reads SGLPA. The Latch loop signature appears at 139–141; that stretch reads HRL.

It belongs to the PYR/PYL/RCAR abscisic acid intracellular receptor family. Homodimer and monomer. Binds ABA on one subunit only. ABA-binding favors monomer and trans-homodimer intermediate, and increases PP2C inhibitor activity. Binds both (-)-ABA and (+)-ABA. Binds to CARs protein in an ABA-independent manner, both at the plasma membrane and in the nucleus. Interacts with HAB1, ABI1 and ABI2, and possibly with other PP2Cs.

It is found in the cytoplasm. The protein localises to the nucleus. The protein resides in the cell membrane. Its function is as follows. Receptor for abscisic acid (ABA) required for ABA-mediated responses such as stomatal closure and germination inhibition. Inhibits the activity of group-A protein phosphatases type 2C (PP2Cs) when activated by ABA. Can be activated by both (-)-ABA and (+)-ABA. This chain is Abscisic acid receptor PYL3 (PYL3), found in Arabidopsis thaliana (Mouse-ear cress).